Here is a 283-residue protein sequence, read N- to C-terminus: 4-diphosphocytidyl-2-C-methyl-D-erythritol kinase (283 aa).

The active site involves Lys10. 99 to 109 serves as a coordination point for ATP; sequence PMGGGLGGGSS. Residue Asp141 is part of the active site.

It belongs to the GHMP kinase family. IspE subfamily. Homodimer.

The catalysed reaction is 4-CDP-2-C-methyl-D-erythritol + ATP = 4-CDP-2-C-methyl-D-erythritol 2-phosphate + ADP + H(+). It participates in isoprenoid biosynthesis; isopentenyl diphosphate biosynthesis via DXP pathway; isopentenyl diphosphate from 1-deoxy-D-xylulose 5-phosphate: step 3/6. Its function is as follows. Catalyzes the phosphorylation of the position 2 hydroxy group of 4-diphosphocytidyl-2C-methyl-D-erythritol. The chain is 4-diphosphocytidyl-2-C-methyl-D-erythritol kinase from Escherichia coli O157:H7 (strain EC4115 / EHEC).